Here is a 249-residue protein sequence, read N- to C-terminus: Cis-4-hydroxycyclohexanecarboxylate dehydrogenase (249 aa).

NAD(+) is bound by residues D38, D63, V64, N90, Y156, K160, A189, and T191. Y156 acts as the Proton acceptor in catalysis.

This sequence belongs to the short-chain dehydrogenases/reductases (SDR) family. In terms of assembly, homotetramer.

The catalysed reaction is cis-4-hydroxycyclohexane-1-carboxylate + NAD(+) = 4-oxocyclohexane-1-carboxylate + NADH + H(+). Its function is as follows. Dehydrogenase involved in a cyclohexanecarboxylate (CHCA) degradation pathway. Catalyzes the NAD(+)-dependent dehydrogenation of cis-4-hydroxycyclohexanecarboxylate (cis-4-hydroxyCHCA) to form 4-oxocyclohexanecarboxylate (4-oxoCHCA). Is highly specific for the cis-4-hydroxy derivative and shows only weak activity with trans-4-hydroxyCHCA. Cannot use NADP(+). The chain is Cis-4-hydroxycyclohexanecarboxylate dehydrogenase from Sinomonas cyclohexanicum (Corynebacterium cyclohexanicum).